A 656-amino-acid chain; its full sequence is Choline transporter-like protein 3 (656 aa).

A helical transmembrane segment spans residues 37–57 (WLVLFFLFWTGLVFIMGYSVV). 2 N-linked (GlcNAc...) asparagine glycosylation sites follow: asparagine 141 and asparagine 154. The next 5 membrane-spanning stretches (helical) occupy residues 216-236 (DTIL…LFAF), 242-262 (LLIH…CGVL), 288-308 (LAFA…IFTL), 337-357 (LWTC…LLSL), and 381-401 (YMWW…LACQ). Asparagine 506 and asparagine 524 each carry an N-linked (GlcNAc...) asparagine glycan. A helical transmembrane segment spans residues 537–557 (FVIFLGKVLVVCFSIFGGLMA). An N-linked (GlcNAc...) asparagine glycan is attached at asparagine 559. Residues 566 to 586 (VWAIPLLLVAFFACVVAHSFL) form a helical membrane-spanning segment. Residues 634 to 656 (AKSQGQKDALPNEEGTELQPIVR) are disordered.

It belongs to the CTL (choline transporter-like) family.

It localises to the membrane. The protein is Choline transporter-like protein 3 (Slc44a3) of Mus musculus (Mouse).